The primary structure comprises 351 residues: High-affinity nickel transport protein (351 aa).

The Cytoplasmic portion of the chain corresponds to 1–19 (MFQLLAGVRMNSTGRPRAK). A helical membrane pass occupies residues 20 to 40 (IILLYALLIAFNIGAWLCALA). Residues 41 to 51 (AFRDHPVLLGT) lie on the Periplasmic side of the membrane. The helical transmembrane segment at 52-72 (ALLAYGLGLRHAVDADHLAAI) threads the bilayer. Residues 73–94 (DNVTRKLMQDGRRPITAGLWFS) are Cytoplasmic-facing. A helical membrane pass occupies residues 95–115 (LGHSSVVVLASVLIAVMATTL). The Periplasmic segment spans residues 116 to 128 (QERLDAFHEVGSV). A helical transmembrane segment spans residues 129–149 (IGTLASALFLFAIAAINLVIL). At 150–199 (RSAYRAFRRVRRGGIYVEEDFDLLFGNRGFLARIFRPLFRFITRSWHMYP) the chain is on the cytoplasmic side. The helical transmembrane segment at 200-220 (LGMLFALGFDTATEVALLGIS) threads the bilayer. The Periplasmic segment spans residues 221–243 (TMEASRGVPIWSILVFPALFTAG). The helical transmembrane segment at 244–264 (MALIDTIDSILMCGAYAWAYA) threads the bilayer. Residues 265-269 (KPVRK) lie on the Cytoplasmic side of the membrane. A helical membrane pass occupies residues 270-290 (LYYNMTITFVSAIVALIVGGI). Over 291-316 (ETLGLLADKFMLKGVFWNAVGALNEN) the chain is Periplasmic. Residues 317–337 (FCQLGFVIIGIFTVCWVVSIV) form a helical membrane-spanning segment. The Cytoplasmic segment spans residues 338–351 (VYRLRRYDDSEVRA).

This sequence belongs to the NiCoT transporter (TC 2.A.52) family.

The protein localises to the cell inner membrane. In terms of biological role, high-affinity nickel transporter responsible for nickel uptake. Necessary for high levels of activity of hydrogenase and urease. Does not transport cobalt. This is High-affinity nickel transport protein (hoxN) from Cupriavidus necator (strain ATCC 17699 / DSM 428 / KCTC 22496 / NCIMB 10442 / H16 / Stanier 337) (Ralstonia eutropha).